Here is a 439-residue protein sequence, read N- to C-terminus: Probable aspartic proteinase GIP2 (439 aa).

Residues 1–23 (MASSCCLHAILLCSLLFITSTTA) form the signal peptide. Residues 47 to 420 (YLTQIQQRTP…DLARSRLGFT (374 aa)) enclose the Peptidase A1 domain. 4 N-linked (GlcNAc...) asparagine glycosylation sites follow: Asn-116, Asn-280, Asn-323, and Asn-434.

It belongs to the peptidase A1 family. In terms of assembly, interacts with the Phytophtora parasitica xyloglucanase XEG1 and xyloglucanase-like XLP1. Possesses stronger binding affinity with XLP1, a truncated paralog of P.parasitica XEG1 which has no enzyme activity.

The protein localises to the secreted. Its subcellular location is the extracellular space. The protein resides in the apoplast. Functionally, involved in plant defense against Phytophtora parasitica. Contributes positively to Nicotiana resistance against P.parasitica. Binds the P.parasitica xyloglucanase XEG1 and inhibits its cell wall degrading enzyme activity and its contribution as P.parasitica virulence factor. XEG1 acts as an important virulence factor during P.parasitica infection but also acts as a pathogen-associated molecular pattern (PAMP) in Nictotiana species, where it can trigger defense responses including cell death. In terms of biological role, (Microbial infection) Possesses stronger binding affinity with XLP1, a truncated paralog of P.parasitica XEG1 which has no enzyme activity. Is impaired in its inhibitor activity towards the P.parasitica xyloglucanase XEG1 when hijacked by XLP1 binding. This is Probable aspartic proteinase GIP2 from Nicotiana benthamiana.